Consider the following 225-residue polypeptide: E3 ubiquitin-protein ligase ATL59 (225 aa).

Residues 22 to 42 (FTFIVCVPICVILIVLLVLYI) traverse the membrane as a helical segment. An RING-type; atypical zinc finger spans residues 97-139 (CSVCLGDYQAEEKLQQMPSCGHTFHMECIDLWLTSHTTCPLCR).

It belongs to the RING-type zinc finger family. ATL subfamily.

It localises to the membrane. It catalyses the reaction S-ubiquitinyl-[E2 ubiquitin-conjugating enzyme]-L-cysteine + [acceptor protein]-L-lysine = [E2 ubiquitin-conjugating enzyme]-L-cysteine + N(6)-ubiquitinyl-[acceptor protein]-L-lysine.. It participates in protein modification; protein ubiquitination. Functionally, E3 ubiquitin-protein ligase able to catalyze polyubiquitination with ubiquitin-conjugating enzyme E2 UBC8, UBC10, UBC11, and UBC34 in vitro. The protein is E3 ubiquitin-protein ligase ATL59 (ATL59) of Arabidopsis thaliana (Mouse-ear cress).